The primary structure comprises 65 residues: Photosystem II reaction center protein J (65 aa).

Basic and acidic residues predominate over residues 1 to 18; that stretch reads MSSKLKGPDGRLPDRLPD. Residues 1-21 are disordered; the sequence is MSSKLKGPDGRLPDRLPDGRP. The chain crosses the membrane as a helical span at residues 36–56; sequence LWLVATAGGIAVIFVLGIFFY.

This sequence belongs to the PsbJ family. As to quaternary structure, PSII is composed of 1 copy each of membrane proteins PsbA, PsbB, PsbC, PsbD, PsbE, PsbF, PsbH, PsbI, PsbJ, PsbK, PsbL, PsbM, PsbT, PsbX, PsbY, Psb30/Ycf12, peripheral proteins PsbO, CyanoQ (PsbQ), PsbU, PsbV and a large number of cofactors. It forms dimeric complexes.

The protein localises to the cellular thylakoid membrane. Functionally, one of the components of the core complex of photosystem II (PSII). PSII is a light-driven water:plastoquinone oxidoreductase that uses light energy to abstract electrons from H(2)O, generating O(2) and a proton gradient subsequently used for ATP formation. It consists of a core antenna complex that captures photons, and an electron transfer chain that converts photonic excitation into a charge separation. The sequence is that of Photosystem II reaction center protein J from Prochlorococcus marinus (strain SARG / CCMP1375 / SS120).